The chain runs to 570 residues: Dihydroxy-acid dehydratase (570 aa).

Cys-61 is a binding site for [2Fe-2S] cluster. Asp-94 provides a ligand contact to Mg(2+). A [2Fe-2S] cluster-binding site is contributed by Cys-135. Residues Asp-136 and Lys-137 each coordinate Mg(2+). Lys-137 bears the N6-carboxylysine mark. Cys-207 is a binding site for [2Fe-2S] cluster. Glu-459 lines the Mg(2+) pocket. Catalysis depends on Ser-485, which acts as the Proton acceptor.

This sequence belongs to the IlvD/Edd family. In terms of assembly, homodimer. [2Fe-2S] cluster serves as cofactor. It depends on Mg(2+) as a cofactor.

It catalyses the reaction (2R)-2,3-dihydroxy-3-methylbutanoate = 3-methyl-2-oxobutanoate + H2O. It carries out the reaction (2R,3R)-2,3-dihydroxy-3-methylpentanoate = (S)-3-methyl-2-oxopentanoate + H2O. It participates in amino-acid biosynthesis; L-isoleucine biosynthesis; L-isoleucine from 2-oxobutanoate: step 3/4. It functions in the pathway amino-acid biosynthesis; L-valine biosynthesis; L-valine from pyruvate: step 3/4. In terms of biological role, functions in the biosynthesis of branched-chain amino acids. Catalyzes the dehydration of (2R,3R)-2,3-dihydroxy-3-methylpentanoate (2,3-dihydroxy-3-methylvalerate) into 2-oxo-3-methylpentanoate (2-oxo-3-methylvalerate) and of (2R)-2,3-dihydroxy-3-methylbutanoate (2,3-dihydroxyisovalerate) into 2-oxo-3-methylbutanoate (2-oxoisovalerate), the penultimate precursor to L-isoleucine and L-valine, respectively. This is Dihydroxy-acid dehydratase from Lactococcus lactis subsp. cremoris (strain SK11).